Consider the following 153-residue polypeptide: Catabolic 3-dehydroquinase (153 aa).

Residue tyrosine 24 is the Proton acceptor of the active site. Residues asparagine 75, histidine 81, and aspartate 88 each contribute to the substrate site. The Proton donor role is filled by histidine 101. Substrate is bound by residues 102-103 (VS) and arginine 112.

Belongs to the type-II 3-dehydroquinase family. In terms of assembly, homododecamer. Adopts a ring-like structure, composed of an arrangement of two hexameric rings stacked on top of one another.

The catalysed reaction is 3-dehydroquinate = 3-dehydroshikimate + H2O. It functions in the pathway aromatic compound metabolism; 3,4-dihydroxybenzoate biosynthesis; 3,4-dihydroxybenzoate from 3-dehydroquinate: step 1/2. Is involved in the catabolism of quinate. Allows the utilization of quinate as carbon source via the beta-ketoadipate pathway. The protein is Catabolic 3-dehydroquinase of Aspergillus oryzae (strain ATCC 42149 / RIB 40) (Yellow koji mold).